The following is a 276-amino-acid chain: NH(3)-dependent NAD(+) synthetase (276 aa).

43–50 provides a ligand contact to ATP; the sequence is GISGGVDS. A Mg(2+)-binding site is contributed by Asp49. Arg146 lines the deamido-NAD(+) pocket. Residue Thr166 coordinates ATP. A Mg(2+)-binding site is contributed by Glu171. Lys179 and Asp186 together coordinate deamido-NAD(+). Lys195 and Thr217 together coordinate ATP. 266–267 is a deamido-NAD(+) binding site; the sequence is HK.

This sequence belongs to the NAD synthetase family. As to quaternary structure, homodimer.

It catalyses the reaction deamido-NAD(+) + NH4(+) + ATP = AMP + diphosphate + NAD(+) + H(+). It participates in cofactor biosynthesis; NAD(+) biosynthesis; NAD(+) from deamido-NAD(+) (ammonia route): step 1/1. Catalyzes the ATP-dependent amidation of deamido-NAD to form NAD. Uses ammonia as a nitrogen source. This is NH(3)-dependent NAD(+) synthetase from Shewanella piezotolerans (strain WP3 / JCM 13877).